Consider the following 240-residue polypeptide: Glutathione-independent glyoxalase hsp3102 (240 aa).

Catalysis depends on residues Cys141, His142, and Glu175.

The protein belongs to the peptidase C56 family. HSP31-like subfamily.

The protein localises to the cytoplasm. It is found in the nucleus. It catalyses the reaction methylglyoxal + H2O = (R)-lactate + H(+). In terms of biological role, catalyzes the conversion of methylglyoxal (MG) to D-lactate in a single glutathione (GSH)-independent step. May play a role in detoxifying endogenously produced glyoxals. Involved in protection against reactive oxygen species (ROS). In Schizosaccharomyces pombe (strain 972 / ATCC 24843) (Fission yeast), this protein is Glutathione-independent glyoxalase hsp3102.